The following is a 446-amino-acid chain: Probable D-serine dehydratase (446 aa).

Position 116 is an N6-(pyridoxal phosphate)lysine (Lys116).

This sequence belongs to the serine/threonine dehydratase family. DsdA subfamily. Requires pyridoxal 5'-phosphate as cofactor.

It carries out the reaction D-serine = pyruvate + NH4(+). This chain is Probable D-serine dehydratase, found in Bacillus thuringiensis (strain Al Hakam).